Reading from the N-terminus, the 743-residue chain is Phosphoribosylformylglycinamidine synthase subunit PurL (743 aa).

H54 is an active-site residue. ATP is bound by residues Y57 and K96. E98 serves as a coordination point for Mg(2+). Substrate contacts are provided by residues S99–H102 and R121. The active-site Proton acceptor is H100. Mg(2+) is bound at residue D122. Q245 contributes to the substrate binding site. D273 contacts Mg(2+). E317–Q319 contacts substrate. Residues D501 and G538 each coordinate ATP. N539 is a Mg(2+) binding site. Position 541 (S541) interacts with substrate.

Belongs to the FGAMS family. In terms of assembly, monomer. Part of the FGAM synthase complex composed of 1 PurL, 1 PurQ and 2 PurS subunits.

The protein localises to the cytoplasm. It catalyses the reaction N(2)-formyl-N(1)-(5-phospho-beta-D-ribosyl)glycinamide + L-glutamine + ATP + H2O = 2-formamido-N(1)-(5-O-phospho-beta-D-ribosyl)acetamidine + L-glutamate + ADP + phosphate + H(+). It functions in the pathway purine metabolism; IMP biosynthesis via de novo pathway; 5-amino-1-(5-phospho-D-ribosyl)imidazole from N(2)-formyl-N(1)-(5-phospho-D-ribosyl)glycinamide: step 1/2. In terms of biological role, part of the phosphoribosylformylglycinamidine synthase complex involved in the purines biosynthetic pathway. Catalyzes the ATP-dependent conversion of formylglycinamide ribonucleotide (FGAR) and glutamine to yield formylglycinamidine ribonucleotide (FGAM) and glutamate. The FGAM synthase complex is composed of three subunits. PurQ produces an ammonia molecule by converting glutamine to glutamate. PurL transfers the ammonia molecule to FGAR to form FGAM in an ATP-dependent manner. PurS interacts with PurQ and PurL and is thought to assist in the transfer of the ammonia molecule from PurQ to PurL. This Halalkalibacterium halodurans (strain ATCC BAA-125 / DSM 18197 / FERM 7344 / JCM 9153 / C-125) (Bacillus halodurans) protein is Phosphoribosylformylglycinamidine synthase subunit PurL.